The chain runs to 120 residues: Glycine cleavage system H protein (120 aa).

The region spanning 17 to 99 (IATVGITSHA…QGAGWFFKLK (83 aa)) is the Lipoyl-binding domain. K58 bears the N6-lipoyllysine mark.

Belongs to the GcvH family. As to quaternary structure, the glycine cleavage system is composed of four proteins: P, T, L and H. (R)-lipoate serves as cofactor.

The glycine cleavage system catalyzes the degradation of glycine. The H protein shuttles the methylamine group of glycine from the P protein to the T protein. The sequence is that of Glycine cleavage system H protein from Agrobacterium fabrum (strain C58 / ATCC 33970) (Agrobacterium tumefaciens (strain C58)).